The following is a 1084-amino-acid chain: Cellulose synthase A catalytic subunit 6 [UDP-forming] (1084 aa).

Met-1 carries the post-translational modification N-acetylmethionine. Over 1-277 (MNTGGRLIAG…KSSKINPYRM (277 aa)) the chain is Cytoplasmic. Zn(2+) is bound by residues Cys-39, Cys-42, Cys-58, Cys-61, Cys-66, Cys-69, Cys-81, and Cys-84. The RING-type; degenerate zinc-finger motif lies at 39–85 (CQICRDEIELTVDGEPFVACNECAFPVCRPCYEYERREGNQACPQCK). A helical transmembrane segment spans residues 278 to 298 (LIVLRLVILGLFFHYRILHPV). The Extracellular segment spans residues 299 to 300 (KD). A helical membrane pass occupies residues 301 to 321 (AYALWLISVICEIWFAVSWVL). Over 322–868 (DQFPKWYPIE…INSVVYPWTS (547 aa)) the chain is Cytoplasmic. Residues Ser-360, Lys-366, Glu-367, and Asp-396 each coordinate UDP-alpha-D-glucose. Asp-396 is a catalytic residue. Residues 450–476 (VRERRAMKRDYEEFKVKINALVATAQK) adopt a coiled-coil conformation. Residue Lys-537 coordinates UDP-alpha-D-glucose. Lys-538 and Asp-562 together coordinate Mn(2+). A coiled-coil region spans residues 675–703 (RKAKTVAADKKKKNREASKQIHALENIEE). Asp-785 is an active-site residue. A helical membrane pass occupies residues 869-889 (LPLIVYCSLPAICLLTGKFIV). Over 890 to 894 (PEISN) the chain is Extracellular. The chain crosses the membrane as a helical span at residues 895–915 (YASILFMALFSSIAITGILEM). Residues 916-930 (QWGKVGIDDWWRNEQ) lie on the Cytoplasmic side of the membrane. A helical membrane pass occupies residues 931-951 (FWVIGGVSAHLFALFQGLLKV). Over 952 to 980 (LAGVDTNFTVTSKAADDGEFSDLYLFKWT) the chain is Extracellular. Asn-958 carries N-linked (GlcNAc...) asparagine glycosylation. Residues 981-1001 (SLLIPPMTLLIINVIGVIVGV) form a helical membrane-spanning segment. The Cytoplasmic segment spans residues 1002-1012 (SDAISNGYDSW). A helical membrane pass occupies residues 1013–1033 (GPLFGRLFFALWVIIHLYPFL). Over 1034 to 1042 (KGLLGKQDR) the chain is Extracellular. Residues 1043-1063 (MPTIIVVWSILLASILTLLWV) traverse the membrane as a helical segment. Residues 1064–1084 (RVNPFVAKGGPILEICGLDCL) lie on the Cytoplasmic side of the membrane.

It belongs to the glycosyltransferase 2 family. Plant cellulose synthase subfamily. As to quaternary structure, interacts with CESA1 and CESA3. Interacts with STL1 and STL2, but not with GOT1. Binds to CSI1 and CSI3. Interacts with PAT24/TIP1. It depends on Zn(2+) as a cofactor. Mn(2+) serves as cofactor. S-acylated. Expressed in germinating seeds, seedlings, roots, stems, leaves and flowers. Not present in mature flowers.

The protein resides in the cell membrane. It catalyses the reaction [(1-&gt;4)-beta-D-glucosyl](n) + UDP-alpha-D-glucose = [(1-&gt;4)-beta-D-glucosyl](n+1) + UDP + H(+). It functions in the pathway glycan metabolism; plant cellulose biosynthesis. Its function is as follows. Catalytic subunit of cellulose synthase terminal complexes ('rosettes'), required for beta-1,4-glucan microfibril crystallization, a major mechanism of the cell wall formation. Involved in the primary cell wall formation. The presence of each protein CESA1 and CESA6 is critical for cell expansion. The hypocotyl elongation is based on a CESA6-dependent cell elongation in dark and a CESA6-independent cell elongation in light. The transition between these two mechanisms requires photosynthesis and PHYB, but not CRY1. The CESA6-dependent cell elongation seems to be independent of gibberellic acid, auxin and ethylene. May be involved in sensitivity to isoxaben. Associates with and moves along cortical microtubules for the process of cellulose deposition. The protein is Cellulose synthase A catalytic subunit 6 [UDP-forming] of Arabidopsis thaliana (Mouse-ear cress).